Reading from the N-terminus, the 201-residue chain is Protein CD300H (201 aa).

The N-terminal stretch at 1–24 (MTQRAGAAMLPSALLLLCVPGCLT) is a signal peptide. The Ig-like V-type domain maps to 25–123 (VSGPSTVMGA…ATILQEDGLS (99 aa)). The Extracellular segment spans residues 25 to 168 (VSGPSTVMGA…CQGSLPSSTC (144 aa)). An intrachain disulfide couples Cys-43 to Cys-111. The N-linked (GlcNAc...) asparagine glycan is linked to Asn-100. Residues 169–189 (FLLLPLLKVPLLLSILGAILW) form a helical membrane-spanning segment. Residues 190 to 201 (VNRPWRTPWTES) lie on the Cytoplasmic side of the membrane.

Belongs to the CD300 family. As to quaternary structure, interacts with TYROBP and HCST. Expressed on CD16+ monocytes and myeloid dendritic cells (at protein level). By contrast, not detected in lymphocytes nor granulocytes (at protein level).

It localises to the membrane. The protein localises to the secreted. In terms of biological role, may play an important role in innate immunity by mediating a signal for the production of a neutrophil chemoattractant. The polypeptide is Protein CD300H (Homo sapiens (Human)).